We begin with the raw amino-acid sequence, 86 residues long: Large ribosomal subunit protein bL31B (86 aa).

The protein belongs to the bacterial ribosomal protein bL31 family. Type B subfamily. Part of the 50S ribosomal subunit.

In Salmonella agona (strain SL483), this protein is Large ribosomal subunit protein bL31B.